A 552-amino-acid polypeptide reads, in one-letter code: Cycloheximide resistance protein (552 aa).

The segment at 46-70 (VLNSSDKSQSSENKEQTEGDQATIQ) is disordered. Polar residues predominate over residues 47–56 (LNSSDKSQSS). A run of 12 helical transmembrane segments spans residues 100 to 120 (AIAAMQIGFLTVSVYMASAIY), 137 to 157 (LATLPLTMFVIGYGIGPLFWS), 168 to 188 (TPLYIITLFIFFILQIPTALS), 194 to 213 (LSVLRVIAGFFAAPALSTGG), 225 to 246 (YSIALGVWSIFAVAGPSIGPLI), 262 to 282 (WSFWFMAILSGVCFIVLSFSL), 346 to 362 (IYIALVYSIMYLIFESV), 381 to 399 (YVSTIIGIIIGGAIYLPTV), 419 to 439 (LPPAIFGAICMPIGVFIFGWT), 445 to 464 (NWFVPLIGMALFAVGAFIIF), 477 to 494 (VEYLASVFSSNAFFRSVS), and 518 to 539 (WGSSILGFISLGMIAIPVFFYL).

This sequence belongs to the major facilitator superfamily. CAR1 family.

It localises to the membrane. Probable transporter. Confers resistance to cycloheximide. This Candida maltosa (Yeast) protein is Cycloheximide resistance protein (CYHR).